Reading from the N-terminus, the 276-residue chain is Undecaprenyl-diphosphatase (276 aa).

6 consecutive transmembrane segments (helical) span residues 43 to 63 (RAMA…VWEF), 85 to 105 (GNLL…ADLI), 109 to 129 (LFNP…MLWA), 183 to 203 (AATE…AVYS), 214 to 234 (ADLP…MIAV), and 249 to 269 (FAWY…FGWV).

This sequence belongs to the UppP family.

The protein resides in the cell inner membrane. It carries out the reaction di-trans,octa-cis-undecaprenyl diphosphate + H2O = di-trans,octa-cis-undecaprenyl phosphate + phosphate + H(+). Functionally, catalyzes the dephosphorylation of undecaprenyl diphosphate (UPP). Confers resistance to bacitracin. The protein is Undecaprenyl-diphosphatase of Pseudomonas putida (strain GB-1).